Reading from the N-terminus, the 390-residue chain is Phosphopentomutase (390 aa).

Mn(2+) is bound by residues Asp-9, Asp-283, His-288, Asp-324, His-325, and His-336.

It belongs to the phosphopentomutase family. It depends on Mn(2+) as a cofactor.

It is found in the cytoplasm. The catalysed reaction is 2-deoxy-alpha-D-ribose 1-phosphate = 2-deoxy-D-ribose 5-phosphate. It catalyses the reaction alpha-D-ribose 1-phosphate = D-ribose 5-phosphate. The protein operates within carbohydrate degradation; 2-deoxy-D-ribose 1-phosphate degradation; D-glyceraldehyde 3-phosphate and acetaldehyde from 2-deoxy-alpha-D-ribose 1-phosphate: step 1/2. Isomerase that catalyzes the conversion of deoxy-ribose 1-phosphate (dRib-1-P) and ribose 1-phosphate (Rib-1-P) to deoxy-ribose 5-phosphate (dRib-5-P) and ribose 5-phosphate (Rib-5-P), respectively. In Thermotoga maritima (strain ATCC 43589 / DSM 3109 / JCM 10099 / NBRC 100826 / MSB8), this protein is Phosphopentomutase.